Consider the following 334-residue polypeptide: Holliday junction branch migration complex subunit RuvB (334 aa).

Positions 4-184 are large ATPase domain (RuvB-L); the sequence is ADRLIQPQLQ…FGIPLRLEFY (181 aa). Residues Arg-24, Gly-65, Lys-68, Thr-69, Thr-70, 131-133, Arg-174, Tyr-184, and Arg-221 contribute to the ATP site; that span reads EDY. Mg(2+) is bound at residue Thr-69. Residues 185–255 form a small ATPAse domain (RuvB-S) region; sequence NIKDLSTIVT…VADHALDLLD (71 aa). The head domain (RuvB-H) stretch occupies residues 258 to 334; the sequence is NEGFDYMDRK…YQHFQLIKPE (77 aa). Residues Arg-294, Arg-313, and Arg-318 each contribute to the DNA site.

The protein belongs to the RuvB family. As to quaternary structure, homohexamer. Forms an RuvA(8)-RuvB(12)-Holliday junction (HJ) complex. HJ DNA is sandwiched between 2 RuvA tetramers; dsDNA enters through RuvA and exits via RuvB. An RuvB hexamer assembles on each DNA strand where it exits the tetramer. Each RuvB hexamer is contacted by two RuvA subunits (via domain III) on 2 adjacent RuvB subunits; this complex drives branch migration. In the full resolvosome a probable DNA-RuvA(4)-RuvB(12)-RuvC(2) complex forms which resolves the HJ.

The protein localises to the cytoplasm. It carries out the reaction ATP + H2O = ADP + phosphate + H(+). In terms of biological role, the RuvA-RuvB-RuvC complex processes Holliday junction (HJ) DNA during genetic recombination and DNA repair, while the RuvA-RuvB complex plays an important role in the rescue of blocked DNA replication forks via replication fork reversal (RFR). RuvA specifically binds to HJ cruciform DNA, conferring on it an open structure. The RuvB hexamer acts as an ATP-dependent pump, pulling dsDNA into and through the RuvAB complex. RuvB forms 2 homohexamers on either side of HJ DNA bound by 1 or 2 RuvA tetramers; 4 subunits per hexamer contact DNA at a time. Coordinated motions by a converter formed by DNA-disengaged RuvB subunits stimulates ATP hydrolysis and nucleotide exchange. Immobilization of the converter enables RuvB to convert the ATP-contained energy into a lever motion, pulling 2 nucleotides of DNA out of the RuvA tetramer per ATP hydrolyzed, thus driving DNA branch migration. The RuvB motors rotate together with the DNA substrate, which together with the progressing nucleotide cycle form the mechanistic basis for DNA recombination by continuous HJ branch migration. Branch migration allows RuvC to scan DNA until it finds its consensus sequence, where it cleaves and resolves cruciform DNA. This is Holliday junction branch migration complex subunit RuvB from Shewanella sp. (strain W3-18-1).